Here is a 427-residue protein sequence, read N- to C-terminus: Enolase (427 aa).

Residue Gln-163 coordinates (2R)-2-phosphoglycerate. Glu-205 (proton donor) is an active-site residue. Mg(2+) contacts are provided by Asp-242, Glu-285, and Asp-312. Residues Lys-337, Arg-366, Ser-367, and Lys-388 each coordinate (2R)-2-phosphoglycerate. Lys-337 functions as the Proton acceptor in the catalytic mechanism.

This sequence belongs to the enolase family. Mg(2+) is required as a cofactor.

The protein localises to the cytoplasm. It is found in the secreted. The protein resides in the cell surface. It catalyses the reaction (2R)-2-phosphoglycerate = phosphoenolpyruvate + H2O. It participates in carbohydrate degradation; glycolysis; pyruvate from D-glyceraldehyde 3-phosphate: step 4/5. Functionally, catalyzes the reversible conversion of 2-phosphoglycerate (2-PG) into phosphoenolpyruvate (PEP). It is essential for the degradation of carbohydrates via glycolysis. This chain is Enolase, found in Paraburkholderia phymatum (strain DSM 17167 / CIP 108236 / LMG 21445 / STM815) (Burkholderia phymatum).